The following is a 365-amino-acid chain: Probable 7-methylxanthine methyltransferase 4 (365 aa).

Tyrosine 18 is an S-adenosyl-L-homocysteine binding site. Threonine 25 contributes to the theobromine binding site. S-adenosyl-L-homocysteine contacts are provided by cysteine 62, glutamine 67, aspartate 99, leucine 100, serine 132, and phenylalanine 133. Positions 150, 153, and 154 each coordinate theobromine. Mg(2+) is bound by residues asparagine 170, aspartate 256, phenylalanine 258, and asparagine 259. Phenylalanine 311 contacts theobromine.

The protein belongs to the methyltransferase superfamily. Type-7 methyltransferase family. Mg(2+) is required as a cofactor.

It catalyses the reaction 7-methylxanthine + S-adenosyl-L-methionine = theobromine + S-adenosyl-L-homocysteine + H(+). The protein operates within alkaloid biosynthesis. In terms of biological role, involved in the biosynthesis of theobromine. This Theobroma cacao (Cacao) protein is Probable 7-methylxanthine methyltransferase 4.